The sequence spans 1069 residues: Adenylate-forming reductase (1069 aa).

The tract at residues 20–391 is adenylation (A) domain; the sequence is HPEDPKAVKS…WKLRQDINYR (372 aa). AMP contacts are provided by residues H262, 357-358, T362, and 437-440; these read AH and AVGR. One can recognise a Carrier domain in the interval 576 to 656; sequence DSLEEDLKDL…KLGASLRHLA (81 aa). S612 is modified (O-(pantetheine 4'-phosphoryl)serine). Residues 686-1032 are reductase (R) domain; that stretch reads TVLLTGSTGN…TGKVILDTSR (347 aa). NADP(+) contacts are provided by residues 693–696, R719, 785–787, Y863, and K867; these read TGNL and NAW.

The protein belongs to the adenylate-forming reductase family.

It catalyses the reaction 5-methylorsellinate + ATP + NADPH + H(+) = 2,4-dihydroxy 5,6-dimethylbenzaldehyde + AMP + diphosphate + NADP(+). The protein operates within secondary metabolite biosynthesis. In terms of biological role, non-canonical non-ribosomal peptide synthetase; part of the cluster A that mediates the biosynthesis of azasperpyranones, members of the azaphilone family that exhibit anti-cancer activities. Azasperpyranones are synthesized by 2 clusters, A and B. Cluster A is responsible for the production of the polyhydric phenol moiety while the azaphilonoid scaffold is produced by the cluster B. The non-reducing polyketide synthase ATEG_03629 produces 5-methyl orsellinic acid, which is then reduced to 5-methyl orsellinic aldehyde by the NRPS-like protein ATEG_03630. 5-methyl orsellinic aldehyde is then first hydroxylated by the FAD-dependent monooxygenase ATEG_03635 and subsequently hydroxylated by the cytochrome P450 monooxygenase ATEG_03631 to produce the unstable polyhydric phenol precursor of azasperpyranones. On the other hand, the polyketide synthase ATEG_07659 is responsible for producing the 3,5-dimethyloctadienone moiety from acetyl-CoA, three malonyl-CoA, and two S-adenosyl methionines (SAM). The 3,5-dimethyloctadienone moiety is then loaded onto the SAT domain of ATEG_07661 and extended with four malonyl-CoA and one SAM, which leads to the formation of 2,4-dihydroxy-6-(5,7-dimethyl-2-oxo-trans-3-trans-5-nonadienyl)-3-methylbenzaldehyde (compound 8) after reductive release and aldol condensation. The FAD-dependent monooxygenase ATEG_07662 is the next enzyme in the biosynthesis sequence and hydroxylates the side chain at the benzylic position of compound 8. In Aspergillus nidulans, afoF, the ortholog of the FAD-dependent oxygenase ATEG_07660, is the key enzyme for the biosynthesis of asperfuranone by catalyzing the hydroxylation at C-8 of to prevent the formation of a six-membered ring hemiacetal intermediate and thus facilitating the formation of a five-membered ring to produce asperfuranone. In Aspergillus terreus, ATEG_07660 is probably not functional, which leads to the formation of the six-membered ring hemiacetal intermediate presperpyranone instead of asperfuranone. Finally, ATEG_03636 is involved in the condensation of the polyhydric phenol moiety produced by cluster A and the perasperpyranone precursor produced by cluster B, to yield azasperpyranone A. Further modifications of azasperpyranone A result in the production of derivatives, including azasperpyranone B to F. The sequence is that of Adenylate-forming reductase from Aspergillus terreus (strain NIH 2624 / FGSC A1156).